A 210-amino-acid chain; its full sequence is Thymidylate kinase (210 aa).

ATP is bound at residue 10–17 (GPEGAGKS).

This sequence belongs to the thymidylate kinase family.

The enzyme catalyses dTMP + ATP = dTDP + ADP. Functionally, phosphorylation of dTMP to form dTDP in both de novo and salvage pathways of dTTP synthesis. The protein is Thymidylate kinase of Pseudomonas putida (strain GB-1).